We begin with the raw amino-acid sequence, 240 residues long: Prolactin-8A6 (240 aa).

A signal peptide spans 1 to 30; sequence MALLLSQPHFSGPLLLLVVSNLLLWEKAAS. 3 disulfide bridges follow: Cys34-Cys41, Cys101-Cys216, and Cys233-Cys240. Residue Asn212 is glycosylated (N-linked (GlcNAc...) asparagine).

The protein belongs to the somatotropin/prolactin family. As to expression, expressed specifically in the spongiotrophoblast and trophoblast giant cells from the junctional zone of the chorioallantoic placenta.

It is found in the secreted. The protein is Prolactin-8A6 (Prl8a6) of Mus musculus (Mouse).